Consider the following 156-residue polypeptide: Putative NrdI-like protein (156 aa).

The protein belongs to the NrdI family.

This Streptococcus pneumoniae serotype 4 (strain ATCC BAA-334 / TIGR4) protein is Putative NrdI-like protein.